Reading from the N-terminus, the 310-residue chain is NADH-cytochrome b5 reductase 1 (310 aa).

Residues 32-52 (EWLPYAVALAAILSGGKVFSN) form a helical membrane-spanning segment. Residues 61–166 (TEFQNFELKE…RGPKGAMVYT (106 aa)) enclose the FAD-binding FR-type domain. Residues 146–161 (AGLR…GPKG) and 172–209 (KIGM…QVDL) each bind FAD.

This sequence belongs to the flavoprotein pyridine nucleotide cytochrome reductase family. Monomer. Component of the 2-(3-amino-3-carboxypropyl)histidine synthase complex composed of DPH1, DPH2, DPH3 and a NADH-dependent reductase, predominantly CBR1. Requires FAD as cofactor.

Its subcellular location is the mitochondrion outer membrane. The catalysed reaction is 2 Fe(III)-[cytochrome b5] + NADH = 2 Fe(II)-[cytochrome b5] + NAD(+) + H(+). The enzyme catalyses 2 Fe(3+)-[Dph3] + NADH = 2 Fe(2+)-[Dph3] + NAD(+) + H(+). It functions in the pathway protein modification; peptidyl-diphthamide biosynthesis. Its function is as follows. NADH-dependent reductase for DPH3 and cytochrome b5. Required for the first step of diphthamide biosynthesis, a post-translational modification of histidine which occurs in elongation factor 2. DPH1 and DPH2 transfer a 3-amino-3-carboxypropyl (ACP) group from S-adenosyl-L-methionine (SAM) to a histidine residue, the reaction is assisted by a reduction system comprising DPH3 and a NADH-dependent reductase, predominantly CBR1. By reducing DPH3, also involved in the formation of the tRNA wobble base modification mcm5s 2U (5-methoxycarbonylmethyl-2-thiouridine), mediated by the elongator complex. The cytochrome b5/NADH cytochrome b5 reductase electron transfer system supports the catalytic activity of several sterol biosynthetic enzymes. The protein is NADH-cytochrome b5 reductase 1 (CBR1) of Ajellomyces capsulatus (strain NAm1 / WU24) (Darling's disease fungus).